The following is a 398-amino-acid chain: Large ribosomal subunit protein uL3 (398 aa).

The span at 1–10 shows a compositional bias: basic and acidic residues; it reads MSHRKFEAPR. A disordered region spans residues 1–34; sequence MSHRKFEAPRHGNLGFRPRKRAARHQGKVKSFPK. Residues 17–28 show a composition bias toward basic residues; the sequence is RPRKRAARHQGK.

The protein belongs to the universal ribosomal protein uL3 family.

The protein resides in the cytoplasm. Functionally, the L3 protein is a component of the large subunit of cytoplasmic ribosomes. This chain is Large ribosomal subunit protein uL3 (rpl3), found in Dictyostelium discoideum (Social amoeba).